Consider the following 160-residue polypeptide: Cytosolic iron-sulfur assembly component 2A (160 aa).

Zn(2+) is bound by residues H89, H123, E150, and E153.

The protein belongs to the MIP18 family. As to quaternary structure, monomer and homodimer. Component of the CIA complex. Interacts with CIAO1. Interacts with IREB2. Interacts with APAF1.

Its subcellular location is the cytoplasm. In terms of biological role, component of the cytosolic iron-sulfur protein assembly (CIA) complex, a multiprotein complex that mediates the incorporation of iron-sulfur cluster into extramitochondrial Fe/S proteins. As a CIA complex component and in collaboration with CIAO1 specifically matures ACO1 and stabilizes IREB2, connecting cytosolic iron-sulfur protein maturation with cellular iron regulation. May play a role in chromosome segregation through establishment of sister chromatid cohesion. May induce apoptosis in collaboration with APAF1. The chain is Cytosolic iron-sulfur assembly component 2A from Bos taurus (Bovine).